A 116-amino-acid polypeptide reads, in one-letter code: Large ribosomal subunit protein bL17 (116 aa).

This sequence belongs to the bacterial ribosomal protein bL17 family. Part of the 50S ribosomal subunit. Contacts protein L32.

The chain is Large ribosomal subunit protein bL17 from Parasynechococcus marenigrum (strain WH8102).